The primary structure comprises 498 residues: Archaemetzincin-1 (498 aa).

Histidine 261 contributes to the Zn(2+) binding site. Glutamate 262 acts as the Proton acceptor in catalysis. The Zn(2+) site is built by histidine 265, cysteine 272, cysteine 277, cysteine 296, and cysteine 299. The interval 332 to 381 is disordered; the sequence is QEAGEPSVWEDTPPASADSGMCCESDSEPGTSVSEPLTPDAGSHTFASGP.

Belongs to the peptidase M54 family. Requires Zn(2+) as cofactor.

In terms of biological role, probable zinc metalloprotease. This Homo sapiens (Human) protein is Archaemetzincin-1 (AMZ1).